We begin with the raw amino-acid sequence, 379 residues long: Homoserine O-succinyltransferase (379 aa).

The region spanning 51–360 is the AB hydrolase-1 domain; that stretch reads NAVLICHALS…DAPQGHDAFL (310 aa). Residue serine 157 is the Nucleophile of the active site. Arginine 227 lines the substrate pocket. Residues aspartate 323 and histidine 356 contribute to the active site. Position 357 (aspartate 357) interacts with substrate.

The protein belongs to the AB hydrolase superfamily. MetX family. In terms of assembly, homodimer.

It is found in the cytoplasm. It catalyses the reaction L-homoserine + succinyl-CoA = O-succinyl-L-homoserine + CoA. The protein operates within amino-acid biosynthesis; L-methionine biosynthesis via de novo pathway; O-succinyl-L-homoserine from L-homoserine: step 1/1. With respect to regulation, requires MetW for activity. Its function is as follows. Transfers a succinyl group from succinyl-CoA to L-homoserine, forming succinyl-L-homoserine. The sequence is that of Homoserine O-succinyltransferase from Pseudomonas syringae pv. syringae (strain B728a).